Here is a 396-residue protein sequence, read N- to C-terminus: Small ribosomal subunit protein uS9m (396 aa).

Positions 374 to 396 are disordered; the sequence is PRVRERKKPGQEGARRKFTWKKR.

This sequence belongs to the universal ribosomal protein uS9 family. In terms of assembly, component of the mitochondrial ribosome small subunit (28S) which comprises a 12S rRNA and about 30 distinct proteins.

It localises to the mitochondrion. In Bos taurus (Bovine), this protein is Small ribosomal subunit protein uS9m (MRPS9).